We begin with the raw amino-acid sequence, 257 residues long: Imidazole glycerol phosphate synthase subunit HisF (257 aa).

Active-site residues include aspartate 11 and aspartate 130.

This sequence belongs to the HisA/HisF family. Heterodimer of HisH and HisF.

The protein resides in the cytoplasm. The enzyme catalyses 5-[(5-phospho-1-deoxy-D-ribulos-1-ylimino)methylamino]-1-(5-phospho-beta-D-ribosyl)imidazole-4-carboxamide + L-glutamine = D-erythro-1-(imidazol-4-yl)glycerol 3-phosphate + 5-amino-1-(5-phospho-beta-D-ribosyl)imidazole-4-carboxamide + L-glutamate + H(+). Its pathway is amino-acid biosynthesis; L-histidine biosynthesis; L-histidine from 5-phospho-alpha-D-ribose 1-diphosphate: step 5/9. Functionally, IGPS catalyzes the conversion of PRFAR and glutamine to IGP, AICAR and glutamate. The HisF subunit catalyzes the cyclization activity that produces IGP and AICAR from PRFAR using the ammonia provided by the HisH subunit. The sequence is that of Imidazole glycerol phosphate synthase subunit HisF from Mannheimia succiniciproducens (strain KCTC 0769BP / MBEL55E).